The following is a 4690-amino-acid chain: Nonribosomal peptide synthetase sidN (4690 aa).

An adenylation 1 region spans residues A238–K656. Residues S779–L856 form the Carrier 1 domain. S816 bears the O-(pantetheine 4'-phosphoryl)serine mark. Residues P925 to F1175 are condensation 1. The segment at E1349–R1760 is adenylation 2. The 77-residue stretch at P1889–R1965 folds into the Carrier 2 domain. Residue S1926 is modified to O-(pantetheine 4'-phosphoryl)serine. A condensation 2 region spans residues P2001 to V2285. Positions T2464–R2869 are adenylation 3. Residues R3002–K3079 enclose the Carrier 3 domain. S3040 is modified (O-(pantetheine 4'-phosphoryl)serine). Residues C3121–T3530 form a condensation 3 region. The Carrier 4 domain occupies S3564–S3637. S3598 is subject to O-(pantetheine 4'-phosphoryl)serine. A condensation 4 region spans residues V3679–E4087. The Carrier 5 domain maps to S4119–S4195. S4156 is subject to O-(pantetheine 4'-phosphoryl)serine. The interval W4262 to N4589 is condensation 5.

It belongs to the NRP synthetase family.

The protein operates within siderophore biosynthesis. Its function is as follows. Nonribosomal peptide synthetase required for the biosynthetis of epichloenin A, an extracellular siderophore that plays a crucial role in endophyte-grass symbioses. SidN assembles epichloenin A by activating and incorporating three trans-anhydromevalonylhydroxyornithine (trans-AMHO), 1 glutamine and 4 glycine moieties. Trans-AMHO is produced from L-ornithine via 2 steps involving a L-ornithine N(5)-monooxygenase and an AHMO-N(5)-transacylase that have still to be identified. The third adenylation domain (A3) of sidN incorporates the hydroxamate groups of the siderophore which forms an octahedral iron complex. The other component amino acids are assembled by sidN adenylation domains A1 and A2. The protein is Nonribosomal peptide synthetase sidN of Epichloe festucae (strain E2368).